The chain runs to 356 residues: Probable protein phosphatase 2C T23F11.1 (356 aa).

The PPM-type phosphatase domain occupies L23–L286. 4 residues coordinate Mn(2+): D59, G60, D228, and D277. The interval N336–V356 is disordered.

The protein belongs to the PP2C family. Requires Mg(2+) as cofactor. It depends on Mn(2+) as a cofactor.

It carries out the reaction O-phospho-L-seryl-[protein] + H2O = L-seryl-[protein] + phosphate. It catalyses the reaction O-phospho-L-threonyl-[protein] + H2O = L-threonyl-[protein] + phosphate. The chain is Probable protein phosphatase 2C T23F11.1 (ppm-2) from Caenorhabditis elegans.